The sequence spans 144 residues: Small ribosomal subunit protein eS10A (144 aa).

The tract at residues 90 to 144 is disordered; sequence THKRQVRPTAPRAGRPEPRERASADAGYRRAEKKDEGAAPSGFAPSFRGGFGRPQ. Residues 103–126 are compositionally biased toward basic and acidic residues; sequence GRPEPRERASADAGYRRAEKKDEG.

This sequence belongs to the eukaryotic ribosomal protein eS10 family. Component of the small ribosomal subunit (SSU). Mature yeast ribosomes consist of a small (40S) and a large (60S) subunit. The 40S small subunit contains 1 molecule of ribosomal RNA (18S rRNA) and at least 33 different proteins. The large 60S subunit contains 3 rRNA molecules (25S, 5.8S and 5S rRNA) and at least 46 different proteins. eS10 interacts with GCN1 (via middle region); this interaction is direct and promotes GCN2 kinase activity.

It localises to the cytoplasm. Its function is as follows. Component of the ribosome, a large ribonucleoprotein complex responsible for the synthesis of proteins in the cell. The small ribosomal subunit (SSU) binds messenger RNAs (mRNAs) and translates the encoded message by selecting cognate aminoacyl-transfer RNA (tRNA) molecules. The large subunit (LSU) contains the ribosomal catalytic site termed the peptidyl transferase center (PTC), which catalyzes the formation of peptide bonds, thereby polymerizing the amino acids delivered by tRNAs into a polypeptide chain. The nascent polypeptides leave the ribosome through a tunnel in the LSU and interact with protein factors that function in enzymatic processing, targeting, and the membrane insertion of nascent chains at the exit of the ribosomal tunnel. eS10 plays a role as a positive regulator of the GCN2 kinase activity by stimulating GCN1-mediated GCN2 activation. This chain is Small ribosomal subunit protein eS10A (rps1001), found in Schizosaccharomyces pombe (strain 972 / ATCC 24843) (Fission yeast).